The following is a 648-amino-acid chain: Macrolide export ATP-binding/permease protein MacB 1 (648 aa).

The region spanning 6-244 (LQLSGIRRHF…PAPTTSRADT (239 aa)) is the ABC transporter domain. 42 to 49 (GASGSGKS) is an ATP binding site. Residues 222 to 248 (VVADRRREPTPPSPAPTTSRADTGGRG) form a disordered region. 4 helical membrane-spanning segments follow: residues 273–293 (FLTM…VALG), 521–541 (LTLL…IGVM), 578–598 (LVCL…GVLF), and 613–633 (AVLM…FFPA).

This sequence belongs to the ABC transporter superfamily. Macrolide exporter (TC 3.A.1.122) family. As to quaternary structure, homodimer. Part of the tripartite efflux system MacAB-TolC, which is composed of an inner membrane transporter, MacB, a periplasmic membrane fusion protein, MacA, and an outer membrane component, TolC. The complex forms a large protein conduit and can translocate molecules across both the inner and outer membranes. Interacts with MacA.

It is found in the cell inner membrane. Part of the tripartite efflux system MacAB-TolC. MacB is a non-canonical ABC transporter that contains transmembrane domains (TMD), which form a pore in the inner membrane, and an ATP-binding domain (NBD), which is responsible for energy generation. Confers resistance against macrolides. The sequence is that of Macrolide export ATP-binding/permease protein MacB 1 from Aeromonas hydrophila subsp. hydrophila (strain ATCC 7966 / DSM 30187 / BCRC 13018 / CCUG 14551 / JCM 1027 / KCTC 2358 / NCIMB 9240 / NCTC 8049).